Here is a 2209-residue protein sequence, read N- to C-terminus: Genome polyprotein (2209 aa).

Gly-2 is lipidated: N-myristoyl glycine; by host. Topologically, residues 2–1520 (GAQVSSQKVG…NINRAMTILQ (1519 aa)) are cytoplasmic. Residues 580-600 (GLGQMLESMIDNTVRETVGAA) are amphipathic alpha-helix. Residues His-901 and Asp-919 each act as for protease 2A activity in the active site. Cys-936 and Cys-938 together coordinate Zn(2+). Residue Cys-990 is the For protease 2A activity of the active site. 2 residues coordinate Zn(2+): Cys-996 and His-998. Residues 1128–1200 (GDSWLKKFTE…HQSCPSQEHQ (73 aa)) are membrane-binding. Residues 1128–1266 (GDSWLKKFTE…SPGTGKSVAT (139 aa)) form an oligomerization region. The segment at 1149–1153 (SNKIS) is RNA-binding. The 157-residue stretch at 1232-1388 (EHTINNYIQF…NEYSRDGKLN (157 aa)) folds into the SF3 helicase domain. Residue 1256-1263 (GSPGTGKS) coordinates ATP. Zn(2+) is bound by residues Cys-1396, Cys-1399, Cys-1408, and Cys-1413. The C4-type zinc finger occupies 1396 to 1413 (CKNCHQPANFKRCCPLVC). Residues 1440-1447 (ERNRRSNI) are RNA-binding. The interval 1451–1456 (MEALFQ) is oligomerization. The stretch at 1521 to 1536 (AVTTFAAVAGVVYVMY) is an intramembrane region. Residues 1537 to 2209 (KLFAGHQGAY…TLYRRWLDSF (673 aa)) lie on the Cytoplasmic side of the membrane. Tyr-1546 is subject to O-(5'-phospho-RNA)-tyrosine. One can recognise a Peptidase C3 domain in the interval 1566–1744 (GPGFDYAVAM…FAAALKRSYF (179 aa)). Catalysis depends on for protease 3C activity residues His-1605, Glu-1636, and Cys-1712. In terms of domain architecture, RdRp catalytic spans 1975-2090 (EKLFAFDYTG…SYPHEVDASL (116 aa)). Mg(2+) contacts are provided by Asp-1981 and Asp-2076.

Belongs to the picornaviruses polyprotein family. As to quaternary structure, interacts with capsid protein VP1 and capsid protein VP3 to form heterotrimeric protomers. In terms of assembly, interacts with capsid protein VP0, and capsid protein VP3 to form heterotrimeric protomers. Interacts with human PVR. Five protomers subsequently associate to form pentamers which serve as building blocks for the capsid. Interacts with capsid protein VP2, capsid protein VP3 and capsid protein VP4 following cleavage of capsid protein VP0. Interacts with capsid protein VP1 and capsid protein VP3 in the mature capsid. As to quaternary structure, interacts with capsid protein VP0 and capsid protein VP1 to form heterotrimeric protomers. Five protomers subsequently associate to form pentamers which serve as building blocks for the capsid. Interacts with capsid protein VP4 in the mature capsid. Interacts with protein 2C; this interaction may be important for virion morphogenesis. In terms of assembly, interacts with capsid protein VP1 and capsid protein VP3. Homodimer. As to quaternary structure, homohexamer; forms a hexameric ring structure with 6-fold symmetry characteristic of AAA+ ATPases. Interacts (via N-terminus) with host RTN3 (via reticulon domain); this interaction is important for viral replication. Interacts with capsid protein VP3; this interaction may be important for virion morphogenesis. In terms of assembly, interacts with protein 3CD. Homodimer. Interacts with host GBF1. Interacts (via GOLD domain) with host ACBD3 (via GOLD domain); this interaction allows the formation of a viral protein 3A/ACBD3 heterotetramer with a 2:2 stoichiometry, which will stimulate the recruitment of host PI4KB in order to synthesize PI4P at the viral RNA replication sites. As to quaternary structure, interacts with RNA-directed RNA polymerase. In terms of assembly, interacts with protein 3AB and with RNA-directed RNA polymerase. Interacts with Viral protein genome-linked and with protein 3CD. The cofactor is Mg(2+). Post-translationally, specific enzymatic cleavages in vivo by the viral proteases yield processing intermediates and the mature proteins. Myristoylation is required for the formation of pentamers during virus assembly. Further assembly of 12 pentamers and a molecule of genomic RNA generates the provirion. In terms of processing, during virion maturation, immature virions are rendered infectious following cleavage of VP0 into VP4 and VP2. This maturation seems to be an autocatalytic event triggered by the presence of RNA in the capsid and it is followed by a conformational change infectious virion. Post-translationally, myristoylation is required during RNA encapsidation and formation of the mature virus particle. VPg is uridylylated by the polymerase into VPg-pUpU. This acts as a nucleotide-peptide primer for the genomic RNA replication.

It localises to the virion. The protein resides in the host cytoplasm. Its subcellular location is the host cytoplasmic vesicle membrane. The protein localises to the host nucleus. The enzyme catalyses a ribonucleoside 5'-triphosphate + H2O = a ribonucleoside 5'-diphosphate + phosphate + H(+). It catalyses the reaction Selective cleavage of Tyr-|-Gly bond in the picornavirus polyprotein.. It carries out the reaction RNA(n) + a ribonucleoside 5'-triphosphate = RNA(n+1) + diphosphate. The catalysed reaction is Selective cleavage of Gln-|-Gly bond in the poliovirus polyprotein. In other picornavirus reactions Glu may be substituted for Gln, and Ser or Thr for Gly.. Replication or transcription is subject to high level of random mutations by the nucleotide analog ribavirin. In terms of biological role, forms an icosahedral capsid of pseudo T=3 symmetry with capsid proteins VP2 and VP3. The capsid is 300 Angstroms in diameter, composed of 60 copies of each capsid protein and enclosing the viral positive strand RNA genome. Capsid protein VP1 mainly forms the vertices of the capsid. Capsid protein VP1 interacts with host cell receptor PVR to provide virion attachment to target host cells. This attachment induces virion internalization predominantly through clathrin- and caveolin-independent endocytosis in Hela cells and through caveolin-mediated endocytosis in brain microvascular endothelial cells. Tyrosine kinases are probably involved in the entry process. Virus binding to PVR induces increased junctional permeability and rearrangement of junctional proteins. Modulation of endothelial tight junctions, as well as cytolytic infection of endothelial cells themselves, may result in loss of endothelial integrity which may help the virus to reach the CNS. After binding to its receptor, the capsid undergoes conformational changes. Capsid protein VP1 N-terminus (that contains an amphipathic alpha-helix) and capsid protein VP4 are externalized. Together, they shape a pore in the host membrane through which viral genome is translocated to host cell cytoplasm. Forms an icosahedral capsid of pseudo T=3 symmetry with capsid proteins VP2 and VP3. The capsid is 300 Angstroms in diameter, composed of 60 copies of each capsid protein and enclosing the viral positive strand RNA genome. Its function is as follows. Lies on the inner surface of the capsid shell. After binding to the host receptor, the capsid undergoes conformational changes. Capsid protein VP4 is released, Capsid protein VP1 N-terminus is externalized, and together, they shape a pore in the host membrane through which the viral genome is translocated into the host cell cytoplasm. Functionally, component of immature procapsids, which is cleaved into capsid proteins VP4 and VP2 after maturation. Allows the capsid to remain inactive before the maturation step. In terms of biological role, cysteine protease that cleaves viral polyprotein and specific host proteins. It is responsible for the autocatalytic cleavage between the P1 and P2 regions, which is the first cleavage occurring in the polyprotein. Also cleaves the host translation initiation factor EIF4G1, in order to shut down the capped cellular mRNA translation. Inhibits the host nucleus-cytoplasm protein and RNA trafficking by cleaving host members of the nuclear pores including NUP98, NUP62 and NUP153. Counteracts stress granule formation probably by antagonizing its assembly or promoting its dissassembly. Cleaves and inhibits host IFIH1/MDA5, thereby inhibiting the type-I IFN production and the establishment of the antiviral state. Cleaves and inhibits host MAVS, thereby inhibiting the type-I IFN production and the establishment of the antiviral state. Plays an essential role in the virus replication cycle by acting as a viroporin. Creates a pore in the host endoplasmic reticulum and as a consequence releases Ca2+ in the cytoplasm of infected cell. In turn, high levels of cytoplasmic calcium may trigger membrane trafficking and transport of viral ER-associated proteins to viroplasms, sites of viral genome replication. Its function is as follows. Induces and associates with structural rearrangements of intracellular membranes. Displays RNA-binding, nucleotide binding and NTPase activities. May play a role in virion morphogenesis and viral RNA encapsidation by interacting with the capsid protein VP3. Functionally, localizes the viral replication complex to the surface of membranous vesicles. Together with protein 3CD binds the Cis-Active RNA Element (CRE) which is involved in RNA synthesis initiation. Acts as a cofactor to stimulate the activity of 3D polymerase, maybe through a nucleid acid chaperone activity. In terms of biological role, localizes the viral replication complex to the surface of membranous vesicles. It inhibits host cell endoplasmic reticulum-to-Golgi apparatus transport and causes the disassembly of the Golgi complex, possibly through GBF1 interaction. This would result in depletion of MHC, trail receptors and IFN receptors at the host cell surface. Plays an essential role in viral RNA replication by recruiting ACBD3 and PI4KB at the viral replication sites, thereby allowing the formation of the rearranged membranous structures where viral replication takes place. Acts as a primer for viral RNA replication and remains covalently bound to viral genomic RNA. VPg is uridylylated prior to priming replication into VPg-pUpU. The oriI viral genomic sequence may act as a template for this. The VPg-pUpU is then used as primer on the genomic RNA poly(A) by the RNA-dependent RNA polymerase to replicate the viral genome. During genome replication, the VPg-RNA linkage is removed by the host TDP2, thereby accelerating replication. During the late stage of the replication cycle, host TDP2 is excluded from sites of viral RNA synthesis and encapsidation, allowing for the generation of progeny virions. Its function is as follows. Involved in the viral replication complex and viral polypeptide maturation. It exhibits protease activity with a specificity and catalytic efficiency that is different from protease 3C. Protein 3CD lacks polymerase activity. Protein 3CD binds to the 5'UTR of the viral genome. Functionally, major viral protease that mediates proteolytic processing of the polyprotein. Cleaves host EIF5B, contributing to host translation shutoff. Also cleaves host PABPC1, contributing to host translation shutoff. Cleaves host RIGI and thus contributes to the inhibition of type I interferon production. Cleaves host NLRP1, triggers host N-glycine-mediated degradation of the autoinhibitory NLRP1 N-terminal fragment. Inhibits the integrated stress response (ISR) in the infected cell by cleaving host G3BP1. Stress granule formation is thus inhibited, which allows protein synthesis and viral replication. In terms of biological role, replicates the viral genomic RNA on the surface of intracellular membranes. May form linear arrays of subunits that propagate along a strong head-to-tail interaction called interface-I. Covalently attaches UMP to a tyrosine of VPg, which is used to prime RNA synthesis. The positive stranded RNA genome is first replicated at virus induced membranous vesicles, creating a dsRNA genomic replication form. This dsRNA is then used as template to synthesize positive stranded RNA genomes. ss(+)RNA genomes are either translated, replicated or encapsidated. This is Genome polyprotein from Homo sapiens (Human).